Reading from the N-terminus, the 835-residue chain is Protein translocase subunit SecA (835 aa).

ATP-binding positions include Gln-85, 103–107, and Asp-492; that span reads GEGKT. A disordered region spans residues 788–807; that stretch reads VQGEAVHPSSDGEEAKKKPV. Zn(2+) is bound by residues Cys-819, Cys-821, Cys-830, and Cys-831.

Belongs to the SecA family. Monomer and homodimer. Part of the essential Sec protein translocation apparatus which comprises SecA, SecYEG and auxiliary proteins SecDF. Other proteins may also be involved. Requires Zn(2+) as cofactor.

The protein localises to the cell membrane. It localises to the cytoplasm. It carries out the reaction ATP + H2O + cellular proteinSide 1 = ADP + phosphate + cellular proteinSide 2.. Functionally, part of the Sec protein translocase complex. Interacts with the SecYEG preprotein conducting channel. Has a central role in coupling the hydrolysis of ATP to the transfer of proteins into and across the cell membrane, serving as an ATP-driven molecular motor driving the stepwise translocation of polypeptide chains across the membrane. This is Protein translocase subunit SecA from Bacillus cereus (strain B4264).